The primary structure comprises 366 residues: Chorismate synthase (366 aa).

The NADP(+) site is built by R48 and R54. FMN is bound by residues 125 to 127 (RSS), 242 to 243 (NA), G287, 302 to 306 (KPTSS), and R328.

This sequence belongs to the chorismate synthase family. Homotetramer. FMNH2 serves as cofactor.

It carries out the reaction 5-O-(1-carboxyvinyl)-3-phosphoshikimate = chorismate + phosphate. It participates in metabolic intermediate biosynthesis; chorismate biosynthesis; chorismate from D-erythrose 4-phosphate and phosphoenolpyruvate: step 7/7. Catalyzes the anti-1,4-elimination of the C-3 phosphate and the C-6 proR hydrogen from 5-enolpyruvylshikimate-3-phosphate (EPSP) to yield chorismate, which is the branch point compound that serves as the starting substrate for the three terminal pathways of aromatic amino acid biosynthesis. This reaction introduces a second double bond into the aromatic ring system. In Rhodospirillum rubrum (strain ATCC 11170 / ATH 1.1.1 / DSM 467 / LMG 4362 / NCIMB 8255 / S1), this protein is Chorismate synthase.